The following is a 314-amino-acid chain: Ribosomal RNA small subunit methyltransferase H (314 aa).

S-adenosyl-L-methionine is bound by residues 35–37 (GGH), aspartate 55, phenylalanine 79, aspartate 101, and glutamine 108. A disordered region spans residues 276-296 (QGGQTLKPVGKKLMPSEAEVA).

The protein belongs to the methyltransferase superfamily. RsmH family.

The protein resides in the cytoplasm. It carries out the reaction cytidine(1402) in 16S rRNA + S-adenosyl-L-methionine = N(4)-methylcytidine(1402) in 16S rRNA + S-adenosyl-L-homocysteine + H(+). Functionally, specifically methylates the N4 position of cytidine in position 1402 (C1402) of 16S rRNA. This is Ribosomal RNA small subunit methyltransferase H from Pectobacterium atrosepticum (strain SCRI 1043 / ATCC BAA-672) (Erwinia carotovora subsp. atroseptica).